Here is a 176-residue protein sequence, read N- to C-terminus: Putative ribosomal protein eS10-like (176 aa).

The tract at residues Thr-104–Gln-176 is disordered. A compositionally biased stretch (basic and acidic residues) spans Ser-108–Arg-139.

It belongs to the eukaryotic ribosomal protein eS10 family.

The sequence is that of Putative ribosomal protein eS10-like (RPS10P5) from Homo sapiens (Human).